A 339-amino-acid polypeptide reads, in one-letter code: Ketol-acid reductoisomerase (NADP(+)) (339 aa).

In terms of domain architecture, KARI N-terminal Rossmann spans 1 to 182 (MRVYYDRDAD…GGGRSGIIET (182 aa)). NADP(+) is bound by residues 24 to 27 (YGSQ), lysine 48, serine 51, threonine 53, and 83 to 86 (DELQ). Histidine 108 is an active-site residue. Glycine 134 is a binding site for NADP(+). The region spanning 183–328 (NFREECETDL…AKLRGMMPWI (146 aa)) is the KARI C-terminal knotted domain. Positions 191, 195, 227, and 231 each coordinate Mg(2+). A substrate-binding site is contributed by serine 252.

The protein belongs to the ketol-acid reductoisomerase family. Mg(2+) serves as cofactor.

The catalysed reaction is (2R)-2,3-dihydroxy-3-methylbutanoate + NADP(+) = (2S)-2-acetolactate + NADPH + H(+). It catalyses the reaction (2R,3R)-2,3-dihydroxy-3-methylpentanoate + NADP(+) = (S)-2-ethyl-2-hydroxy-3-oxobutanoate + NADPH + H(+). It participates in amino-acid biosynthesis; L-isoleucine biosynthesis; L-isoleucine from 2-oxobutanoate: step 2/4. The protein operates within amino-acid biosynthesis; L-valine biosynthesis; L-valine from pyruvate: step 2/4. Functionally, involved in the biosynthesis of branched-chain amino acids (BCAA). Catalyzes an alkyl-migration followed by a ketol-acid reduction of (S)-2-acetolactate (S2AL) to yield (R)-2,3-dihydroxy-isovalerate. In the isomerase reaction, S2AL is rearranged via a Mg-dependent methyl migration to produce 3-hydroxy-3-methyl-2-ketobutyrate (HMKB). In the reductase reaction, this 2-ketoacid undergoes a metal-dependent reduction by NADPH to yield (R)-2,3-dihydroxy-isovalerate. The chain is Ketol-acid reductoisomerase (NADP(+)) from Rhizobium rhizogenes (strain K84 / ATCC BAA-868) (Agrobacterium radiobacter).